Consider the following 199-residue polypeptide: NAD(P)H dehydrogenase (quinone) (199 aa).

The Flavodoxin-like domain occupies 4–190 (VLVLYYSAYG…AGARYQGRQI (187 aa)). FMN contacts are provided by residues 10 to 15 (SAYGHI) and 78 to 80 (TRF). Position 12 (Tyr-12) interacts with NAD(+). Trp-98 contacts substrate. FMN is bound by residues 113 to 119 (SSATQHG) and His-134.

It belongs to the WrbA family. FMN serves as cofactor.

It catalyses the reaction a quinone + NADH + H(+) = a quinol + NAD(+). The enzyme catalyses a quinone + NADPH + H(+) = a quinol + NADP(+). This Bradyrhizobium diazoefficiens (strain JCM 10833 / BCRC 13528 / IAM 13628 / NBRC 14792 / USDA 110) protein is NAD(P)H dehydrogenase (quinone).